A 159-amino-acid polypeptide reads, in one-letter code: Putative viral CXC chemokine 2 (159 aa).

Intrachain disulfides connect Cys50–Cys77 and Cys52–Cys93.

It belongs to the intercrine alpha (chemokine CxC) family.

In Human cytomegalovirus (strain Merlin) (HHV-5), this protein is Putative viral CXC chemokine 2 (UL147).